Reading from the N-terminus, the 499-residue chain is Trichothecene C-4 hydroxylase (499 aa).

Residues 7 to 29 traverse the membrane as a helical segment; sequence VGVAVQLVLTVLLASIPLRVIWN. Asn-173 and Asn-287 each carry an N-linked (GlcNAc...) asparagine glycan. Cys-442 contributes to the heme binding site. N-linked (GlcNAc...) asparagine glycosylation occurs at Asn-473.

It belongs to the cytochrome P450 family. Requires heme as cofactor.

Its subcellular location is the membrane. Its pathway is sesquiterpene biosynthesis; trichothecene biosynthesis. Functionally, trichothecene C-4 hydroxylase; part of the gene cluster that mediates the production of the antimicrobial trichothecene harzianum A (HA) that plays a role in Botrytis cinerea antagonistic activity and plant defense priming. The biosynthesis of harzianum A begins with the cyclization of farnesyl diphosphate to trichodiene and is catalyzed by the trichodiene synthase TRI5. Trichodiene undergoes a series of oxygenations catalyzed by the cytochrome P450 monooxygenase TRI4. TRI4 controls the addition of 3 oxygens at C-2, C-11, and the C-12, C-13-epoxide to form the intermediate isotrichodiol. Isotrichodiol then undergoes a non-enzymatic isomerization and cyclization to form 12,13-epoxytrichothec-9-ene (EPT) which is further converted to trichodermol by the cytochrome P450 monooxygenase TRI11 via C-4 hydroxylation. The last step of HA synthesis is esterification of an octatriendioyl moiety to the C-4 oxygen of trichodermol. The octatriendioyl moiety is probably produced by the polyketide synthase TRI17 and the esterification performed by the trichothecene O-acetyltransferase TRI3. The chain is Trichothecene C-4 hydroxylase from Trichoderma arundinaceum.